A 414-amino-acid polypeptide reads, in one-letter code: Esterase FrsA (414 aa).

Belongs to the FrsA family.

The catalysed reaction is a carboxylic ester + H2O = an alcohol + a carboxylate + H(+). In terms of biological role, catalyzes the hydrolysis of esters. The sequence is that of Esterase FrsA from Salmonella dublin (strain CT_02021853).